Reading from the N-terminus, the 1906-residue chain is Serine protease/ABC transporter B family protein tagB (1906 aa).

Residues 1–31 form the signal peptide; that stretch reads MKFQFSSPSKIFLFSSVILILIFIGIKFELL. Residues 96-134 are disordered; sequence INNNNNNNNKLNNNNNNNNNNNNNNNNNNNNNNNNNNNN. The Peptidase S8 domain maps to 356-763; it reads PTVIFGTKDK…ASSTNPSNAI (408 aa). Residues D387 and H432 each act as charge relay system in the active site. N-linked (GlcNAc...) asparagine glycosylation is found at N594, N621, and N672. The active-site Charge relay system is S695. N-linked (GlcNAc...) asparagine glycans are attached at residues N747 and N823. Helical transmembrane passes span 1011–1031, 1076–1096, and 1121–1141; these read YIIIIVAGGTMVLIILLLMWI, FIIELTIATACSLVATAASIL, and FIIIFILAFIEFLFTNVGSWI. One can recognise an ABC transmembrane type-1 domain in the interval 1080–1363; that stretch reads LTIATACSLV…LFGVYVSYIQ (284 aa). N-linked (GlcNAc...) asparagine glycosylation occurs at N1172. 3 helical membrane passes run 1210 to 1230, 1309 to 1329, and 1332 to 1352; these read LVFIFTISWKLSLAFFAAVPI, WLLIESLTFVILYFSAYLVIQ, and FTVGLMISFSLYIGYVVDASS. The disordered stretch occupies residues 1385-1455; that stretch reads LEEEEADRLA…NNNNNIGNLD (71 aa). Over residues 1396 to 1405 the composition is skewed to gly residues; that stretch reads LSGGGGGGGD. A compositionally biased stretch (basic and acidic residues) spans 1407 to 1420; the sequence is GDDKKDKQNIENGK. In terms of domain architecture, ABC transporter spans 1518–1756; the sequence is IEFKNVSFRY…KGKYYRMFSE (239 aa). A glycan (N-linked (GlcNAc...) asparagine) is linked at N1522. ATP is bound at residue 1553–1560; the sequence is GPSGSGKS. N1658 is a glycosylation site (N-linked (GlcNAc...) asparagine). The disordered stretch occupies residues 1757 to 1906; sequence DKDDTPLQNN…QMDEENDEER (150 aa). Composition is skewed to low complexity over residues 1765 to 1779 and 1814 to 1871; these read NNNNNKNNNNNNNNN and EQQE…DYDQ. Residues 1872 to 1886 show a composition bias toward pro residues; it reads VPPPPPLPSESPSPP.

This sequence in the C-terminal section; belongs to the ABC transporter superfamily. ABCB family. Multidrug resistance exporter (TC 3.A.1.201) subfamily. It in the N-terminal section; belongs to the peptidase S8 family.

Its subcellular location is the membrane. Functionally, intercellular communication via tagB may mediate integration of cellular differentiation with morphogenesis. In Dictyostelium discoideum (Social amoeba), this protein is Serine protease/ABC transporter B family protein tagB (tagB).